A 273-amino-acid chain; its full sequence is Dermonecrotic toxin LapSicTox-alphaIB1ai (273 aa).

Residue H5 is part of the active site. Residues E25 and D27 each contribute to the Mg(2+) site. H41 acts as the Nucleophile in catalysis. Disulfide bonds link C45–C51 and C47–C190. A Mg(2+)-binding site is contributed by D85. An N-linked (GlcNAc...) asparagine glycan is attached at N250.

The protein belongs to the arthropod phospholipase D family. Class II subfamily. Requires Mg(2+) as cofactor. In terms of tissue distribution, expressed by the venom gland.

Its subcellular location is the secreted. The enzyme catalyses an N-(acyl)-sphingosylphosphocholine = an N-(acyl)-sphingosyl-1,3-cyclic phosphate + choline. It catalyses the reaction an N-(acyl)-sphingosylphosphoethanolamine = an N-(acyl)-sphingosyl-1,3-cyclic phosphate + ethanolamine. The catalysed reaction is a 1-acyl-sn-glycero-3-phosphocholine = a 1-acyl-sn-glycero-2,3-cyclic phosphate + choline. It carries out the reaction a 1-acyl-sn-glycero-3-phosphoethanolamine = a 1-acyl-sn-glycero-2,3-cyclic phosphate + ethanolamine. In terms of biological role, dermonecrotic toxins cleave the phosphodiester linkage between the phosphate and headgroup of certain phospholipids (sphingolipid and lysolipid substrates), forming an alcohol (often choline) and a cyclic phosphate. This toxin acts on sphingomyelin (SM). It may also act on ceramide phosphoethanolamine (CPE), lysophosphatidylcholine (LPC) and lysophosphatidylethanolamine (LPE), but not on lysophosphatidylserine (LPS), and lysophosphatidylglycerol (LPG). It acts by transphosphatidylation, releasing exclusively cyclic phosphate products as second products. Induces dermonecrosis, hemolysis, increased vascular permeability, edema, inflammatory response, and platelet aggregation. This Loxosceles apachea (Apache recluse spider) protein is Dermonecrotic toxin LapSicTox-alphaIB1ai.